We begin with the raw amino-acid sequence, 115 residues long: DNA-directed RNA polymerase II subunit RPB11-b2 (115 aa).

It belongs to the archaeal Rpo11/eukaryotic RPB11/RPC19 RNA polymerase subunit family. In terms of assembly, component of the RNA polymerase II (Pol II) complex consisting of 12 subunits.

It is found in the nucleus. DNA-dependent RNA polymerase catalyzes the transcription of DNA into RNA using the four ribonucleoside triphosphates as substrates. Component of RNA polymerase II which synthesizes mRNA precursors and many functional non-coding RNAs. Pol II is the central component of the basal RNA polymerase II transcription machinery. It is composed of mobile elements that move relative to each other. RPB11 is part of the core element with the central large cleft. The protein is DNA-directed RNA polymerase II subunit RPB11-b2 (POLR2J3) of Homo sapiens (Human).